Reading from the N-terminus, the 343-residue chain is 4-hydroxy-2-oxovalerate aldolase 4 (343 aa).

In terms of domain architecture, Pyruvate carboxyltransferase spans 8–260 (VTVHDMTLRD…ETGVDVAKIT (253 aa)). 16–17 (RD) contributes to the substrate binding site. Position 17 (Asp17) interacts with Mn(2+). Residue His20 is the Proton acceptor of the active site. Ser170 and His199 together coordinate substrate. Mn(2+) contacts are provided by His199 and His201. Residue Tyr290 participates in substrate binding.

Belongs to the 4-hydroxy-2-oxovalerate aldolase family.

It catalyses the reaction (S)-4-hydroxy-2-oxopentanoate = acetaldehyde + pyruvate. The sequence is that of 4-hydroxy-2-oxovalerate aldolase 4 from Dechloromonas aromatica (strain RCB).